The sequence spans 538 residues: Putative cysteine ligase BshC (538 aa).

Positions 421–485 (VEEKFQEAKK…LERRHEVELN (65 aa)) form a coiled coil.

It belongs to the BshC family.

Its function is as follows. Involved in bacillithiol (BSH) biosynthesis. May catalyze the last step of the pathway, the addition of cysteine to glucosamine malate (GlcN-Mal) to generate BSH. In Bacillus cytotoxicus (strain DSM 22905 / CIP 110041 / 391-98 / NVH 391-98), this protein is Putative cysteine ligase BshC.